We begin with the raw amino-acid sequence, 383 residues long: Succinyl-diaminopimelate desuccinylase (383 aa).

His73 is a Zn(2+) binding site. Asp75 is a catalytic residue. Asp107 is a binding site for Zn(2+). Catalysis depends on Glu141, which acts as the Proton acceptor. Residues Glu142, Glu170, and His356 each contribute to the Zn(2+) site.

The protein belongs to the peptidase M20A family. DapE subfamily. Homodimer. Requires Zn(2+) as cofactor. It depends on Co(2+) as a cofactor.

The catalysed reaction is N-succinyl-(2S,6S)-2,6-diaminopimelate + H2O = (2S,6S)-2,6-diaminopimelate + succinate. Its pathway is amino-acid biosynthesis; L-lysine biosynthesis via DAP pathway; LL-2,6-diaminopimelate from (S)-tetrahydrodipicolinate (succinylase route): step 3/3. Its function is as follows. Catalyzes the hydrolysis of N-succinyl-L,L-diaminopimelic acid (SDAP), forming succinate and LL-2,6-diaminopimelate (DAP), an intermediate involved in the bacterial biosynthesis of lysine and meso-diaminopimelic acid, an essential component of bacterial cell walls. The protein is Succinyl-diaminopimelate desuccinylase of Pseudomonas paraeruginosa (strain DSM 24068 / PA7) (Pseudomonas aeruginosa (strain PA7)).